The sequence spans 115 residues: Xenovulene A biosynthesis cluster protein asL2 (115 aa).

Part of the gene cluster that mediates the biosynthesis of xenovulene A, an unusual meroterpenoid that has potent inhibitory effects on the human gamma-aminobutyrate A (GABAA) benzodiazepine receptor. The first step of xenovulene A biosynthesis is the biosynthesis of 3-methylorcinaldehyde performed by the non-reducing polyketide synthase aspks1. The salicylate hydroxylase asL1 then catalyzes the oxidative dearomatization of 3-methylorcinaldehyde to yield a dearomatized hydroxycyclohexadione. The 2-oxoglutarate-dependent dioxygenase asL3 further catalyzes the oxidative ring expansion to provide the first tropolone metabolite. The cytochrome P450 monooxygenase asR2 allows the synthesis of tropolone hemiacetal. In parallel, a previously unrecognised class of terpene cyclase, asR6, produces alpha-humulene from farnesylpyrophosphate (FPP). The putative Diels-Alderase asR5 probably catalyzes the formation of the tropolone-humulene skeleton by linking humulene and the polyketide moiety. Oxidative-ring contractions catalyzed by asL4 and asL6 then processively remove carbon atoms from the polyketide to yield xenovulene A. This Sarocladium schorii (Acremonium strictum (strain IMI 501407)) protein is Xenovulene A biosynthesis cluster protein asL2.